The following is a 938-amino-acid chain: Ubiquitin carboxyl-terminal hydrolase Usp2 (938 aa).

Disordered stretches follow at residues 1 to 53, 91 to 117, 130 to 254, 273 to 297, 360 to 410, and 500 to 610; these read MMLD…KVGA, KVKTTLQPHRRSRAGEDSRNNNYNTSR, FNGN…ISTT, EQNQVQQQEEQPQPSSSKSASHRYP, LSGQ…NLQQ, and KDAT…EKSE. Over residues 22 to 36 the composition is skewed to low complexity; sequence STTKTSSVVATSASS. Low complexity-rich tracts occupy residues 137 to 158, 167 to 177, 198 to 227, and 275 to 289; these read TTTNSTTINNTTSRNTTSNTSN, STTATATSTST, MNGHTNNNNNNTRNSSNINNGGNNNMQRQQ, and NQVQQQEEQPQPSSS. A compositionally biased stretch (polar residues) spans 392-410; that stretch reads ASRSNHGSQAGGSSSNLQQ. Low complexity-rich tracts occupy residues 502–555 and 574–583; these read ATTA…TARS and TSRSSIGTSS. Residues 592–610 are compositionally biased toward basic and acidic residues; it reads HNSDDGYKTASSSRDEKSE. A USP domain is found at 613 to 938; sequence CGLRNIGNTC…SAYILFYERT (326 aa). Cys-622 serves as the catalytic Nucleophile. Positions 765, 768, 814, and 817 each coordinate Zn(2+). The active-site Proton acceptor is the His-895.

This sequence belongs to the peptidase C19 family. In terms of assembly, interacts (via N-terminus) with imd (via N-terminus). Interacts with Rpt6.

The enzyme catalyses Thiol-dependent hydrolysis of ester, thioester, amide, peptide and isopeptide bonds formed by the C-terminal Gly of ubiquitin (a 76-residue protein attached to proteins as an intracellular targeting signal).. Functionally, hydrolase that deubiquitinates polyubiquitinated target proteins. Required for preventing the activation of the Toll signaling cascades under unchallenged conditions. Essential for bodily calcium homeostasis. Required for preventing the activation of the immune deficiency (Imd) signaling cascade under unchallenged conditions. Regulates the Imd pathway by specifically removing 'Lys-48'-linked ubiquitin from imd. Also promotes imd degradation probably by binding to imd and enhancing its association with the proteasome. The sequence is that of Ubiquitin carboxyl-terminal hydrolase Usp2 from Drosophila melanogaster (Fruit fly).